We begin with the raw amino-acid sequence, 66 residues long: Large ribosomal subunit protein bL35 (66 aa).

The interval 20–40 is disordered; sequence GKVKHAQRGKRHGMIKRTKKQ.

The protein belongs to the bacterial ribosomal protein bL35 family.

The sequence is that of Large ribosomal subunit protein bL35 from Nitrobacter winogradskyi (strain ATCC 25391 / DSM 10237 / CIP 104748 / NCIMB 11846 / Nb-255).